Here is a 131-residue protein sequence, read N- to C-terminus: Binder of sperm protein homolog 2 (131 aa).

The N-terminal stretch at 1 to 22 is a signal peptide; sequence MEVMSHLVHWVFLAVYMYELNA. 2 consecutive Fibronectin type-II domains span residues 35–79 and 80–128; these read ISTD…YCTA and QDPP…QCSP. 4 cysteine pairs are disulfide-bonded: cysteine 40-cysteine 64, cysteine 54-cysteine 77, cysteine 85-cysteine 111, and cysteine 99-cysteine 126.

Belongs to the seminal plasma protein family. Epididymis.

The protein localises to the secreted. Functionally, binds sperm in vitro but has no effect on sperm capacitation. Also binds gelatin and heparin, but not chondroitin sulfate B or phospholipid liposomes. This Mus musculus (Mouse) protein is Binder of sperm protein homolog 2.